The sequence spans 245 residues: Geranylgeranylglyceryl phosphate synthase (245 aa).

The Mg(2+) site is built by D22 and S51. Residues Y169 to G175, G200 to G201, and G222 to T223 contribute to the sn-glycerol 1-phosphate site.

It belongs to the GGGP/HepGP synthase family. Group II subfamily. As to quaternary structure, homotetramer. Homohexamer. Mg(2+) serves as cofactor.

The protein localises to the cytoplasm. The catalysed reaction is sn-glycerol 1-phosphate + (2E,6E,10E)-geranylgeranyl diphosphate = sn-3-O-(geranylgeranyl)glycerol 1-phosphate + diphosphate. It participates in membrane lipid metabolism; glycerophospholipid metabolism. Functionally, prenyltransferase that catalyzes the transfer of the geranylgeranyl moiety of geranylgeranyl diphosphate (GGPP) to the C3 hydroxyl of sn-glycerol-1-phosphate (G1P). This reaction is the first ether-bond-formation step in the biosynthesis of archaeal membrane lipids. The polypeptide is Geranylgeranylglyceryl phosphate synthase (Methanothermobacter thermautotrophicus (strain ATCC 29096 / DSM 1053 / JCM 10044 / NBRC 100330 / Delta H) (Methanobacterium thermoautotrophicum)).